We begin with the raw amino-acid sequence, 156 residues long: Small ribosomal subunit protein uS7 (156 aa).

Belongs to the universal ribosomal protein uS7 family. Part of the 30S ribosomal subunit. Contacts proteins S9 and S11.

Functionally, one of the primary rRNA binding proteins, it binds directly to 16S rRNA where it nucleates assembly of the head domain of the 30S subunit. Is located at the subunit interface close to the decoding center, probably blocks exit of the E-site tRNA. The protein is Small ribosomal subunit protein uS7 of Gloeobacter violaceus (strain ATCC 29082 / PCC 7421).